Consider the following 159-residue polypeptide: Ribosomal RNA large subunit methyltransferase H (159 aa).

Residues Leu76, Gly108, and 127–132 each bind S-adenosyl-L-methionine; that span reads FGRLTL.

Belongs to the RNA methyltransferase RlmH family. As to quaternary structure, homodimer.

It localises to the cytoplasm. It catalyses the reaction pseudouridine(1915) in 23S rRNA + S-adenosyl-L-methionine = N(3)-methylpseudouridine(1915) in 23S rRNA + S-adenosyl-L-homocysteine + H(+). Specifically methylates the pseudouridine at position 1915 (m3Psi1915) in 23S rRNA. The polypeptide is Ribosomal RNA large subunit methyltransferase H (Listeria welshimeri serovar 6b (strain ATCC 35897 / DSM 20650 / CCUG 15529 / CIP 8149 / NCTC 11857 / SLCC 5334 / V8)).